Consider the following 657-residue polypeptide: Putative GreA-associated domains protein (657 aa).

One can recognise a GRAD2 domain in the interval 1-152 (MDTRDLTAYS…EQEGNKEKAT (152 aa)). The GRAD1 domain occupies 153–657 (EFYKKALYRF…TAGSFGTLWE (505 aa)).

This chain is Putative GreA-associated domains protein, found in Treponema pallidum (strain Nichols).